A 740-amino-acid chain; its full sequence is F-BAR and double SH3 domains protein 2 (740 aa).

The region spanning 8-282 is the F-BAR domain; the sequence is VKVTQELRNI…NSSKVVRDYN (275 aa). The disordered stretch occupies residues 303 to 323; sequence PCDSDTSRQLESETGTTEEHS. A compositionally biased stretch (basic and acidic residues) spans 307 to 323; it reads DTSRQLESETGTTEEHS. Residues 356–397 adopt a coiled-coil conformation; sequence GVALSEQSRAELEQKIDEARESIRKAEIIKLKAEARLDLLKQ. SH3 domains follow at residues 469-530 and 567-629; these read NYPL…FPTS and ASVC…ELSA. The tract at residues 567–629 is required and sufficient for location at clathrin-coated pits; that stretch reads ASVCFVKALY…PSVLVEELSA (63 aa). Positions 629-645 are enriched in polar residues; sequence ASENGDTPWTREIQISP. The segment at 629 to 740 is disordered; that stretch reads ASENGDTPWT…KMEDVEITLV (112 aa). Residues 646–657 show a composition bias toward pro residues; the sequence is SPKPHTSLPPLP. A phosphoserine mark is found at Ser-675 and Ser-681. Polar residues predominate over residues 675 to 706; that stretch reads SQFFPRSPSANENSLHAESPGFSQASRQTPDT.

Homodimer. Interacts (via SH3 domain 2) with ITSN1 (via SH3 domain 4). Recruited to clathrin-coated pits during a mid-to-late stage of assembly via interaction with ITSN1. Interacts (via SH3 domain 1) with WASL. Interacts with WAS. Interacts with CASK and MAGI1. CASK inhibits interaction with MAGI1. Post-translationally, phosphorylated. Phosphorylation on a Ser residue is important for recruitment to the cell membrane and for its role in promoting endocytosis. Detected in inner ear vestibula and in stereocilia in cochlear hair cell bundles (at protein level). Ubiquitous. Detected in testis, liver, brain cortex, cerebellum, kidney, organ of Corti, utricle, spiral ganglion, tongue and eye.

The protein localises to the cytoplasm. It is found in the cell junction. Its subcellular location is the membrane. It localises to the clathrin-coated pit. The protein resides in the cell membrane. The protein localises to the cell projection. It is found in the stereocilium. Adapter protein that plays a role in endocytosis via clathrin-coated pits. Contributes to the internalization of cell surface receptors, such as integrin ITGB1 and transferrin receptor. Promotes endocytosis of EGFR in cancer cells, and thereby contributes to the down-regulation of EGFR signaling. Recruited to clathrin-coated pits during a mid-to-late stage of assembly, where it is required for normal progress from U-shaped intermediate stage pits to terminal, omega-shaped pits. Binds to membranes enriched in phosphatidylinositol 3,4-bisphosphate or phosphatidylinositol 3,4,5-trisphosphate. When bound to membranes, promotes actin polymerization via its interaction with WAS and/or WASL which leads to the activation of the Arp2/3 complex. Does not promote actin polymerisation in the absence of membranes. In Mus musculus (Mouse), this protein is F-BAR and double SH3 domains protein 2 (Fchsd2).